Reading from the N-terminus, the 415-residue chain is Gamma-glutamyl phosphate reductase (415 aa).

The protein belongs to the gamma-glutamyl phosphate reductase family.

The protein localises to the cytoplasm. The enzyme catalyses L-glutamate 5-semialdehyde + phosphate + NADP(+) = L-glutamyl 5-phosphate + NADPH + H(+). Its pathway is amino-acid biosynthesis; L-proline biosynthesis; L-glutamate 5-semialdehyde from L-glutamate: step 2/2. Its function is as follows. Catalyzes the NADPH-dependent reduction of L-glutamate 5-phosphate into L-glutamate 5-semialdehyde and phosphate. The product spontaneously undergoes cyclization to form 1-pyrroline-5-carboxylate. The polypeptide is Gamma-glutamyl phosphate reductase (Bacillus cereus (strain 03BB102)).